The primary structure comprises 210 residues: MSRHPEVKWAQRIDKVYITVQLADAKDAKVNLEPEGVFSFSATAGTDGNLYESKLELNDKVNVEESKISVGVRSIFCIVEKAEAKWWKKLVRDDQKAPHFVKVDWDKWVDEDDDGADVNVDGMDFSNFGGMGGMGGMGGMGDMMGGMGGMGGMGGMAEMMGGMGGMGGMGGMDEFEDESDDEEEVSKPQDAEKAAEAGKSQESDAKTETS.

The CS domain occupies 2–91 (SRHPEVKWAQ…AEAKWWKKLV (90 aa)). Residues 165–210 (GMGGMGGMDEFEDESDDEEEVSKPQDAEKAAEAGKSQESDAKTETS) form a disordered region. Positions 173-184 (DEFEDESDDEEE) are enriched in acidic residues. Over residues 185–210 (VSKPQDAEKAAEAGKSQESDAKTETS) the composition is skewed to basic and acidic residues.

This is an uncharacterized protein from Oryza sativa subsp. indica (Rice).